We begin with the raw amino-acid sequence, 426 residues long: MDLQITCTEIIKPSSPTPQHQSTYKLSIIDQLTPNVYFSIILLYSNAGESTAKTSDHLKKSLSNTLTHYYPLAGQLKYDQLIVDCNDQGVPFIEAHVANDMRQLLKIPNIDVLEQLLPFKPHEGFDSDRSNLTLQVNYFGCGGMAIGLCFRHKVIDATTAAFFVKNWGVIARGAGEIKDLIIDHASLFPARDLSCLAKSVDEEFLKPESETKRFVFDGPTIASFQETFTSFERRPTRFEVVSAVILGALITATRESDDESNVPERLDTIISVNLRQRMNPPFPEHCMGNIISGGLVYWPLEKKVDYGCLAKEIHESIKKVDDQFARKFYGDAEFLNLPRLAGAEDVKKREFWVTSWCKTPLYEADFGWGNPKWAGNSMRLNQITVFFDSSDGEGVEAWVGLPRKDMARFEKDSGILAYTSPNPSIF.

Catalysis depends on proton acceptor residues histidine 152 and aspartate 365.

The protein belongs to the plant acyltransferase family. As to quaternary structure, monomer. Expressed in maturing fruits and in juice vesicles.

The catalysed reaction is isomeliandiol + acetyl-CoA = 21-O-acetyl-isomeliandiol + CoA. It functions in the pathway secondary metabolite biosynthesis; terpenoid biosynthesis. In terms of biological role, acetyltransferase involved in the biosynthesis of limonoids triterpene natural products such as limonin, a compound with insecticidal activity responsible for the bitter taste in citrus. Catalyzes the formation of 21-O-acetyl-isomeliandiol from isomeliandiol. The chain is Limonoid 21-O-acetyltransferse from Citrus sinensis (Sweet orange).